Reading from the N-terminus, the 302-residue chain is Ubiquinone biosynthesis protein COQ4, mitochondrial (302 aa).

The N-terminal 19 residues, 1-19 (MNSSPARAVRALVQSQSRQ), are a transit peptide targeting the mitochondrion. The Zn(2+) site is built by histidine 176, aspartate 177, histidine 180, and glutamate 192. Basic and acidic residues predominate over residues 268–282 (PPPDMRDARKRERDA). Residues 268 to 302 (PPPDMRDARKRERDARRRRKQLETEAQQGLDAASL) are disordered.

Belongs to the COQ4 family. As to quaternary structure, component of a multi-subunit COQ enzyme complex, composed of at least COQ3, COQ4, COQ5, COQ6, COQ7 and COQ9. The cofactor is Zn(2+).

The protein localises to the mitochondrion inner membrane. The catalysed reaction is a 4-hydroxy-3-methoxy-5-(all-trans-polyprenyl)benzoate + H(+) = a 2-methoxy-6-(all-trans-polyprenyl)phenol + CO2. Its pathway is cofactor biosynthesis; ubiquinone biosynthesis. Its function is as follows. Lyase that catalyzes the C1-decarboxylation of 4-hydroxy-3-methoxy-5-(all-trans-polyprenyl)benzoic acid into 2-methoxy-6-(all-trans-polyprenyl)phenol during ubiquinone biosynthesis. The chain is Ubiquinone biosynthesis protein COQ4, mitochondrial from Pyricularia oryzae (strain 70-15 / ATCC MYA-4617 / FGSC 8958) (Rice blast fungus).